Consider the following 396-residue polypeptide: 1-deoxy-D-xylulose 5-phosphate reductoisomerase (396 aa).

NADPH-binding residues include T13, G14, S15, I16, and N127. K128 serves as a coordination point for 1-deoxy-D-xylulose 5-phosphate. E129 serves as a coordination point for NADPH. D153 is a binding site for Mn(2+). 1-deoxy-D-xylulose 5-phosphate is bound by residues S154, E155, S184, and H207. Position 155 (E155) interacts with Mn(2+). NADPH is bound at residue G213. 1-deoxy-D-xylulose 5-phosphate is bound by residues S220, N225, K226, and E229. A Mn(2+)-binding site is contributed by E229.

This sequence belongs to the DXR family. It depends on Mg(2+) as a cofactor. Mn(2+) is required as a cofactor.

It carries out the reaction 2-C-methyl-D-erythritol 4-phosphate + NADP(+) = 1-deoxy-D-xylulose 5-phosphate + NADPH + H(+). Its pathway is isoprenoid biosynthesis; isopentenyl diphosphate biosynthesis via DXP pathway; isopentenyl diphosphate from 1-deoxy-D-xylulose 5-phosphate: step 1/6. In terms of biological role, catalyzes the NADPH-dependent rearrangement and reduction of 1-deoxy-D-xylulose-5-phosphate (DXP) to 2-C-methyl-D-erythritol 4-phosphate (MEP). In Pseudomonas paraeruginosa (strain DSM 24068 / PA7) (Pseudomonas aeruginosa (strain PA7)), this protein is 1-deoxy-D-xylulose 5-phosphate reductoisomerase.